Here is a 155-residue protein sequence, read N- to C-terminus: Small ribosomal subunit protein uS9 (155 aa).

The protein belongs to the universal ribosomal protein uS9 family.

This chain is Small ribosomal subunit protein uS9, found in Rhizobium johnstonii (strain DSM 114642 / LMG 32736 / 3841) (Rhizobium leguminosarum bv. viciae).